A 154-amino-acid polypeptide reads, in one-letter code: Superoxide dismutase [Cu-Zn] (154 aa).

3 residues coordinate Cu cation: His47, His49, and His64. Cys58 and Cys147 are disulfide-bonded. Residues His64, His72, His81, and Asp84 each coordinate Zn(2+). Residue His121 coordinates Cu cation. Basic and acidic residues predominate over residues Asp125–Lys137. The segment at Asp125–Cys147 is disordered. Arg144 serves as a coordination point for substrate.

In terms of assembly, homodimer. The cofactor is Cu cation. It depends on Zn(2+) as a cofactor.

The protein resides in the cytoplasm. The catalysed reaction is 2 superoxide + 2 H(+) = H2O2 + O2. Its function is as follows. Destroys radicals which are normally produced within the cells and which are toxic to biological systems. The sequence is that of Superoxide dismutase [Cu-Zn] from Aspergillus niger.